Reading from the N-terminus, the 171-residue chain is ATP synthase subunit b 2 (171 aa).

Residues 9–29 (APWHHPVFWVAVAFVLFFVLF) form a helical membrane-spanning segment.

Belongs to the ATPase B chain family. In terms of assembly, F-type ATPases have 2 components, F(1) - the catalytic core - and F(0) - the membrane proton channel. F(1) has five subunits: alpha(3), beta(3), gamma(1), delta(1), epsilon(1). F(0) has three main subunits: a(1), b(2) and c(10-14). The alpha and beta chains form an alternating ring which encloses part of the gamma chain. F(1) is attached to F(0) by a central stalk formed by the gamma and epsilon chains, while a peripheral stalk is formed by the delta and b chains.

It localises to the cell inner membrane. Functionally, f(1)F(0) ATP synthase produces ATP from ADP in the presence of a proton or sodium gradient. F-type ATPases consist of two structural domains, F(1) containing the extramembraneous catalytic core and F(0) containing the membrane proton channel, linked together by a central stalk and a peripheral stalk. During catalysis, ATP synthesis in the catalytic domain of F(1) is coupled via a rotary mechanism of the central stalk subunits to proton translocation. Its function is as follows. Component of the F(0) channel, it forms part of the peripheral stalk, linking F(1) to F(0). This is ATP synthase subunit b 2 from Granulibacter bethesdensis (strain ATCC BAA-1260 / CGDNIH1).